Consider the following 385-residue polypeptide: Tetraacyldisaccharide 4'-kinase (385 aa).

Residue 60–67 coordinates ATP; sequence TVGGSGKT.

The protein belongs to the LpxK family.

It catalyses the reaction a lipid A disaccharide + ATP = a lipid IVA + ADP + H(+). Its pathway is glycolipid biosynthesis; lipid IV(A) biosynthesis; lipid IV(A) from (3R)-3-hydroxytetradecanoyl-[acyl-carrier-protein] and UDP-N-acetyl-alpha-D-glucosamine: step 6/6. Functionally, transfers the gamma-phosphate of ATP to the 4'-position of a tetraacyldisaccharide 1-phosphate intermediate (termed DS-1-P) to form tetraacyldisaccharide 1,4'-bis-phosphate (lipid IVA). In Psychrobacter arcticus (strain DSM 17307 / VKM B-2377 / 273-4), this protein is Tetraacyldisaccharide 4'-kinase.